A 361-amino-acid polypeptide reads, in one-letter code: tRNA-specific 2-thiouridylase MnmA (361 aa).

ATP contacts are provided by residues 10–17 and Met36; that span reads GMSGGVDS. Residue Cys104 is the Nucleophile of the active site. The cysteines at positions 104 and 202 are disulfide-linked. Residue Gly128 participates in ATP binding. Residues 152–154 form an interaction with tRNA region; the sequence is KDQ. The active-site Cysteine persulfide intermediate is Cys202. The segment at 308–309 is interaction with tRNA; it reads RY.

The protein belongs to the MnmA/TRMU family.

The protein localises to the cytoplasm. The catalysed reaction is S-sulfanyl-L-cysteinyl-[protein] + uridine(34) in tRNA + AH2 + ATP = 2-thiouridine(34) in tRNA + L-cysteinyl-[protein] + A + AMP + diphosphate + H(+). Functionally, catalyzes the 2-thiolation of uridine at the wobble position (U34) of tRNA, leading to the formation of s(2)U34. The polypeptide is tRNA-specific 2-thiouridylase MnmA (Clostridioides difficile (strain 630) (Peptoclostridium difficile)).